We begin with the raw amino-acid sequence, 92 residues long: Small ribosomal subunit protein uS19c (92 aa).

It belongs to the universal ribosomal protein uS19 family.

Its subcellular location is the plastid. It localises to the chloroplast. Its function is as follows. Protein S19 forms a complex with S13 that binds strongly to the 16S ribosomal RNA. This Gossypium barbadense (Sea Island cotton) protein is Small ribosomal subunit protein uS19c.